The chain runs to 275 residues: Bis(5'-nucleosyl)-tetraphosphatase, symmetrical (275 aa).

The protein belongs to the Ap4A hydrolase family.

The catalysed reaction is P(1),P(4)-bis(5'-adenosyl) tetraphosphate + H2O = 2 ADP + 2 H(+). Hydrolyzes diadenosine 5',5'''-P1,P4-tetraphosphate to yield ADP. This chain is Bis(5'-nucleosyl)-tetraphosphatase, symmetrical, found in Nitrosospira multiformis (strain ATCC 25196 / NCIMB 11849 / C 71).